Reading from the N-terminus, the 201-residue chain is Glutathione peroxidase 1, mitochondrial (201 aa).

Residues 1 to 27 (MLLTRKNVAVRPARAARRDVRAMSLLG) constitute a mitochondrion transit peptide. The active site involves Sec75. Sec75 is a non-standard amino acid (selenocysteine).

It localises to the mitochondrion. The enzyme catalyses 2 glutathione + H2O2 = glutathione disulfide + 2 H2O. May constitute a glutathione peroxidase-like protective system against oxidative stresses. Hydrogen peroxide, tert-butyl hydroperoxide and cumene, but not phosphatidylcholine hydroperoxide, can act as acceptors. This Chlamydomonas reinhardtii (Chlamydomonas smithii) protein is Glutathione peroxidase 1, mitochondrial.